Reading from the N-terminus, the 162-residue chain is Interleukin-15 (162 aa).

Positions 1 to 29 are cleaved as a signal peptide; the sequence is MRILKPYLRSTSIQCYLCLLLNSHFLTEA. Residues 30 to 48 constitute a propeptide that is removed on maturation; the sequence is CIPVFILSCINAGLPKTEA. 2 cysteine pairs are disulfide-bonded: Cys83-Cys133 and Cys90-Cys136. Asn104 and Asn127 each carry an N-linked (GlcNAc...) asparagine glycan.

This sequence belongs to the IL-15/IL-21 family.

It is found in the secreted. Cytokine that plays a major role in the development of inflammatory and protective immune responses to microbial invaders and parasites by modulating immune cells of both the innate and adaptive immune systems. Stimulates the proliferation of natural killer cells, T-cells and B-cells and promotes the secretion of several cytokines. In monocytes, induces the production of IL8 and monocyte chemotactic protein 1/CCL2, two chemokines that attract neutrophils and monocytes respectively to sites of infection. Unlike most cytokines, which are secreted in soluble form, IL15 is expressed in association with its high affinity IL15RA on the surface of IL15-producing cells and delivers signals to target cells that express IL2RB and IL2RG receptor subunits. Binding to its receptor triggers the phosphorylation of JAK1 and JAK3 and the recruitment and subsequent phosphorylation of signal transducer and activator of transcription-3/STAT3 and STAT5. In mast cells, induces the rapid tyrosine phosphorylation of STAT6 and thereby controls mast cell survival and release of cytokines such as IL4. In Felis catus (Cat), this protein is Interleukin-15 (IL15).